The following is a 462-amino-acid chain: 3-isopropylmalate dehydratase large subunit (462 aa).

Positions 337, 397, and 400 each coordinate [4Fe-4S] cluster.

Belongs to the aconitase/IPM isomerase family. LeuC type 1 subfamily. In terms of assembly, heterodimer of LeuC and LeuD. Requires [4Fe-4S] cluster as cofactor.

It carries out the reaction (2R,3S)-3-isopropylmalate = (2S)-2-isopropylmalate. It participates in amino-acid biosynthesis; L-leucine biosynthesis; L-leucine from 3-methyl-2-oxobutanoate: step 2/4. Its function is as follows. Catalyzes the isomerization between 2-isopropylmalate and 3-isopropylmalate, via the formation of 2-isopropylmaleate. The chain is 3-isopropylmalate dehydratase large subunit from Listeria monocytogenes serovar 1/2a (strain ATCC BAA-679 / EGD-e).